The sequence spans 479 residues: F-box protein SKIP17 (479 aa).

An F-box domain is found at 92 to 138 (NSNSWSLPPELTIKVFSMLDTKSMMQAAVCCTMFNKCAMDRLCYSHI). Residues 435–479 (EMMEAEDDEVDEEDDSDDDTDDVSDEDESENDDDMGMGFDVDYLL) form a disordered region. Residues 437–469 (MEAEDDEVDEEDDSDDDTDDVSDEDESENDDDM) are compositionally biased toward acidic residues.

As to quaternary structure, part of a SCF (ASK-cullin-F-box) protein ligase complex. Interacts with SPK1B/ASK2.

The protein resides in the nucleus. It functions in the pathway protein modification; protein ubiquitination. Functionally, component of SCF(ASK-cullin-F-box) E3 ubiquitin ligase complexes, which may mediate the ubiquitination and subsequent proteasomal degradation of target proteins. The chain is F-box protein SKIP17 (SKIP17) from Arabidopsis thaliana (Mouse-ear cress).